Reading from the N-terminus, the 253-residue chain is 4-phosphopantoate--beta-alanine ligase (253 aa).

ATP contacts are provided by residues Arg-17, Arg-39, 179 to 181 (DLN), 185 to 186 (RT), and 197 to 198 (NL).

Belongs to the archaeal phosphopantothenate synthetase family. As to quaternary structure, homodimer.

The enzyme catalyses (R)-4-phosphopantoate + beta-alanine + ATP = (R)-4'-phosphopantothenate + AMP + diphosphate + H(+). Its pathway is cofactor biosynthesis; coenzyme A biosynthesis. In terms of biological role, catalyzes the condensation of (R)-4-phosphopantoate and beta-alanine to 4'-phosphopantothenate in the CoA biosynthesis pathway. The chain is 4-phosphopantoate--beta-alanine ligase from Methanosarcina mazei (strain ATCC BAA-159 / DSM 3647 / Goe1 / Go1 / JCM 11833 / OCM 88) (Methanosarcina frisia).